The following is a 176-amino-acid chain: Ribosome maturation factor RimM (176 aa).

The PRC barrel domain maps to 99–176 (EDEYYWSDLV…RMVVDWERDF (78 aa)).

Belongs to the RimM family. Binds ribosomal protein uS19.

Its subcellular location is the cytoplasm. Functionally, an accessory protein needed during the final step in the assembly of 30S ribosomal subunit, possibly for assembly of the head region. Essential for efficient processing of 16S rRNA. May be needed both before and after RbfA during the maturation of 16S rRNA. It has affinity for free ribosomal 30S subunits but not for 70S ribosomes. The polypeptide is Ribosome maturation factor RimM (Psychrobacter sp. (strain PRwf-1)).